The sequence spans 183 residues: ATP-dependent protease subunit HslV (183 aa).

Threonine 9 is a catalytic residue. 3 residues coordinate Na(+): alanine 164, cysteine 167, and threonine 170.

Belongs to the peptidase T1B family. HslV subfamily. A double ring-shaped homohexamer of HslV is capped on each side by a ring-shaped HslU homohexamer. The assembly of the HslU/HslV complex is dependent on binding of ATP.

The protein localises to the cytoplasm. It carries out the reaction ATP-dependent cleavage of peptide bonds with broad specificity.. Its activity is regulated as follows. Allosterically activated by HslU binding. Protease subunit of a proteasome-like degradation complex believed to be a general protein degrading machinery. The polypeptide is ATP-dependent protease subunit HslV (Hydrogenovibrio crunogenus (strain DSM 25203 / XCL-2) (Thiomicrospira crunogena)).